Reading from the N-terminus, the 210-residue chain is Redox-sensing transcriptional repressor Rex (210 aa).

A DNA-binding region (H-T-H motif) is located at residues 17-56 (KYHRYLNELMKNDVDRISSKELGEKIGFTASQIRQDLNCF). An NAD(+)-binding site is contributed by 91-96 (GAGNIG).

This sequence belongs to the transcriptional regulatory Rex family. In terms of assembly, homodimer.

The protein resides in the cytoplasm. Modulates transcription in response to changes in cellular NADH/NAD(+) redox state. The protein is Redox-sensing transcriptional repressor Rex of Clostridium botulinum (strain Eklund 17B / Type B).